A 171-amino-acid chain; its full sequence is Translationally-controlled tumor protein homolog (171 aa).

The region spanning 1 to 171 is the TCTP domain; sequence MIIYRDCISQ…FKDGLEMEKC (171 aa).

This sequence belongs to the TCTP family. In terms of tissue distribution, expressed by the venom gland.

The protein localises to the secreted. Venom protein that causes edema, enhances vascular permeability and is likely related to the inflammatory activity of the venom. This chain is Translationally-controlled tumor protein homolog, found in Micrurus fulvius (Eastern coral snake).